The following is a 188-amino-acid chain: dCTP deaminase (188 aa).

DCTP-binding positions include Lys111–Arg116, Thr135–Glu137, Gln156, Tyr170, and Gln180. Glu137 acts as the Proton donor/acceptor in catalysis.

The protein belongs to the dCTP deaminase family. As to quaternary structure, homotrimer.

The catalysed reaction is dCTP + H2O + H(+) = dUTP + NH4(+). It participates in pyrimidine metabolism; dUMP biosynthesis; dUMP from dCTP (dUTP route): step 1/2. In terms of biological role, catalyzes the deamination of dCTP to dUTP. The sequence is that of dCTP deaminase from Acidovorax sp. (strain JS42).